Here is a 214-residue protein sequence, read N- to C-terminus: Uridine kinase (214 aa).

11–18 (GGSGSGKT) is an ATP binding site.

The protein belongs to the uridine kinase family.

The protein resides in the cytoplasm. It carries out the reaction uridine + ATP = UMP + ADP + H(+). The enzyme catalyses cytidine + ATP = CMP + ADP + H(+). The protein operates within pyrimidine metabolism; CTP biosynthesis via salvage pathway; CTP from cytidine: step 1/3. It participates in pyrimidine metabolism; UMP biosynthesis via salvage pathway; UMP from uridine: step 1/1. The polypeptide is Uridine kinase (Brevibacillus brevis (strain 47 / JCM 6285 / NBRC 100599)).